The primary structure comprises 455 residues: MAENKYLTVTDLNYYITQKFKNDPYLHKVFLQGELSNFRYRRNSHQYFSLKDEKSKINVVMFRSYFDKVKFKPEEGMKVYVTGYVSVYGPQGSYQFYAENMEPAGLGALYEQLKQLQVKLAKEGLFNPEHKKKIPRFPDRIAVVTSASGAVIHDIMVTANRRFPHAEIDLFPAQVQGDTAAESLVRAMRQIAAEGDKYDVMIIGRGGGSLEDLWPFNEEEVVRQVYNMQMPVISSVGHETDTTLCDLVADARAATPTAAAEYATPNLMDELAGIHQLQSRLFSSMQTIIRQKRDRLNRIQNSIIMREPTRLYDQQIETVDRLKQRLQNSMQNKLDHSKQDYRLLNQRLFAVNPDKQINQMKQQRLFLAKRLSDNMQHYLKDKRNIFAQIVQQLDDYSPLKTLERGFVYTTDRDGKTISSVKQVNKNDSLNLHFKDGQVAAKVVEVKEEKNANEEK.

The protein belongs to the XseA family. As to quaternary structure, heterooligomer composed of large and small subunits.

It is found in the cytoplasm. It catalyses the reaction Exonucleolytic cleavage in either 5'- to 3'- or 3'- to 5'-direction to yield nucleoside 5'-phosphates.. Bidirectionally degrades single-stranded DNA into large acid-insoluble oligonucleotides, which are then degraded further into small acid-soluble oligonucleotides. In Lactobacillus acidophilus (strain ATCC 700396 / NCK56 / N2 / NCFM), this protein is Exodeoxyribonuclease 7 large subunit.